A 564-amino-acid polypeptide reads, in one-letter code: Arginine--tRNA ligase (564 aa).

The 'HIGH' region motif lies at 124 to 134 (PNIAKDMHVGH).

The protein belongs to the class-I aminoacyl-tRNA synthetase family. Monomer.

Its subcellular location is the cytoplasm. The catalysed reaction is tRNA(Arg) + L-arginine + ATP = L-arginyl-tRNA(Arg) + AMP + diphosphate. This is Arginine--tRNA ligase from Chlamydia caviae (strain ATCC VR-813 / DSM 19441 / 03DC25 / GPIC) (Chlamydophila caviae).